A 251-amino-acid polypeptide reads, in one-letter code: Coproheme decarboxylase (251 aa).

Fe-coproporphyrin III is bound by residues arginine 133, tyrosine 147–lysine 151, histidine 174, glutamine 187, and serine 225. Tyrosine 147 is a catalytic residue.

The protein belongs to the ChdC family. Type 1 subfamily. The cofactor is Fe-coproporphyrin III.

The enzyme catalyses Fe-coproporphyrin III + 2 H2O2 + 2 H(+) = heme b + 2 CO2 + 4 H2O. It catalyses the reaction Fe-coproporphyrin III + H2O2 + H(+) = harderoheme III + CO2 + 2 H2O. The catalysed reaction is harderoheme III + H2O2 + H(+) = heme b + CO2 + 2 H2O. The protein operates within porphyrin-containing compound metabolism; protoheme biosynthesis. Involved in coproporphyrin-dependent heme b biosynthesis. Catalyzes the decarboxylation of Fe-coproporphyrin III (coproheme) to heme b (protoheme IX), the last step of the pathway. The reaction occurs in a stepwise manner with a three-propionate intermediate. The polypeptide is Coproheme decarboxylase (Listeria monocytogenes serotype 4a (strain HCC23)).